Consider the following 356-residue polypeptide: Histidinol-phosphate aminotransferase 2 (356 aa).

Lys-217 bears the N6-(pyridoxal phosphate)lysine mark.

It belongs to the class-II pyridoxal-phosphate-dependent aminotransferase family. Histidinol-phosphate aminotransferase subfamily. As to quaternary structure, homodimer. Pyridoxal 5'-phosphate is required as a cofactor.

It catalyses the reaction L-histidinol phosphate + 2-oxoglutarate = 3-(imidazol-4-yl)-2-oxopropyl phosphate + L-glutamate. Its pathway is amino-acid biosynthesis; L-histidine biosynthesis; L-histidine from 5-phospho-alpha-D-ribose 1-diphosphate: step 7/9. The sequence is that of Histidinol-phosphate aminotransferase 2 from Burkholderia pseudomallei (strain 1710b).